The primary structure comprises 710 residues: PWWP domain-containing DNA repair factor 3A (710 aa).

Residues 106-160 form a disordered region; sequence QESSAGTGRADRSLRGKPMEHVSSPCDSNSSSLPRGDVLGSSRPHRRRPCVQQSL. Positions 114–125 are enriched in basic and acidic residues; that stretch reads RADRSLRGKPME. Residues 128-137 are compositionally biased toward low complexity; that stretch reads SSPCDSNSSS. The residue at position 161 (Ser161) is a Phosphoserine. 2 disordered regions span residues 177–204 and 230–398; these read KKGL…ESGS and NGSS…EEPP. The span at 288–297 shows a compositional bias: low complexity; that stretch reads PSACSEPGEC. 2 positions are modified to phosphoserine: Ser374 and Ser375. Polar residues predominate over residues 375-385; that stretch reads SEESMGSNSMR. One can recognise a PWWP domain in the interval 411 to 472; the sequence is VGMLVWHKHK…KHFDCKEKQT (62 aa).

Belongs to the PWWP3A family. Interacts with TP53BP1 (via BRCT domain); the interaction is not dependent on its phosphorylation status. Binds nucleosomes. Interacts with trimethylated 'Lys-36' of histone H3 (H3K36me3) (in vitro).

It localises to the nucleus. Its function is as follows. Involved in the DNA damage response pathway by contributing to the maintenance of chromatin architecture. Recruited to the vicinity of DNA breaks by TP53BP1 and plays an accessory role to facilitate damage-induced chromatin changes and promoting chromatin relaxation. Required for efficient DNA repair and cell survival following DNA damage. The sequence is that of PWWP domain-containing DNA repair factor 3A from Homo sapiens (Human).